Consider the following 185-residue polypeptide: Probable chorismate pyruvate-lyase 1 (185 aa).

Substrate contacts are provided by arginine 68, leucine 106, and glutamate 164.

The protein belongs to the UbiC family.

It is found in the cytoplasm. It catalyses the reaction chorismate = 4-hydroxybenzoate + pyruvate. It participates in cofactor biosynthesis; ubiquinone biosynthesis. Its function is as follows. Removes the pyruvyl group from chorismate, with concomitant aromatization of the ring, to provide 4-hydroxybenzoate (4HB) for the ubiquinone pathway. The polypeptide is Probable chorismate pyruvate-lyase 1 (Pseudomonas entomophila (strain L48)).